We begin with the raw amino-acid sequence, 354 residues long: Sulfate/thiosulfate import ATP-binding protein CysA 2 (354 aa).

One can recognise an ABC transporter domain in the interval 3–237 (IHIQQVNKHF…PSNPFVYEFL (235 aa)). 35–42 (GPSGSGKT) contacts ATP.

This sequence belongs to the ABC transporter superfamily. Sulfate/tungstate importer (TC 3.A.1.6) family. The complex is composed of two ATP-binding proteins (CysA), two transmembrane proteins (CysT and CysW) and a solute-binding protein (CysP).

The protein localises to the cell inner membrane. The catalysed reaction is sulfate(out) + ATP + H2O = sulfate(in) + ADP + phosphate + H(+). It carries out the reaction thiosulfate(out) + ATP + H2O = thiosulfate(in) + ADP + phosphate + H(+). Functionally, part of the ABC transporter complex CysAWTP involved in sulfate/thiosulfate import. Responsible for energy coupling to the transport system. The sequence is that of Sulfate/thiosulfate import ATP-binding protein CysA 2 from Shewanella oneidensis (strain ATCC 700550 / JCM 31522 / CIP 106686 / LMG 19005 / NCIMB 14063 / MR-1).